A 113-amino-acid polypeptide reads, in one-letter code: U10-theraphotoxin-Hs2a (113 aa).

A signal peptide spans 1–21 (MNTVRVTFLLVFVLAVSLGQA). The propeptide occupies 22-67 (DEDGNRMEKRQKKTEAENLLLPKLEELDAKLWEEDSVESRNSRQKR). 3 disulfides stabilise this stretch: Cys-68–Cys-86, Cys-75–Cys-91, and Cys-85–Cys-106.

This sequence belongs to the neurotoxin 14 (magi-1) family. 02 (HWTX-XVIc) subfamily. Expressed by the venom gland.

It localises to the secreted. Its function is as follows. Probable ion channel inhibitor. This Cyriopagopus schmidti (Chinese bird spider) protein is U10-theraphotoxin-Hs2a.